Reading from the N-terminus, the 171-residue chain is Urease accessory protein UreE (171 aa).

The interval 143 to 171 is disordered; it reads SGGHQHHHGHDHDHGHHGHDHDHHHPDHE. Positions 152 to 171 are enriched in basic and acidic residues; sequence HDHDHGHHGHDHDHHHPDHE.

Belongs to the UreE family.

The protein resides in the cytoplasm. Functionally, involved in urease metallocenter assembly. Binds nickel. Probably functions as a nickel donor during metallocenter assembly. The polypeptide is Urease accessory protein UreE (Brucella abortus biovar 1 (strain 9-941)).